Here is a 359-residue protein sequence, read N- to C-terminus: Peptide chain release factor 1 (359 aa).

N5-methylglutamine is present on Gln-236.

The protein belongs to the prokaryotic/mitochondrial release factor family. Post-translationally, methylated by PrmC. Methylation increases the termination efficiency of RF1.

Its subcellular location is the cytoplasm. In terms of biological role, peptide chain release factor 1 directs the termination of translation in response to the peptide chain termination codons UAG and UAA. The protein is Peptide chain release factor 1 of Malacoplasma penetrans (strain HF-2) (Mycoplasma penetrans).